Consider the following 372-residue polypeptide: Aminomethyltransferase (372 aa).

This sequence belongs to the GcvT family. In terms of assembly, the glycine cleavage system is composed of four proteins: P, T, L and H.

It catalyses the reaction N(6)-[(R)-S(8)-aminomethyldihydrolipoyl]-L-lysyl-[protein] + (6S)-5,6,7,8-tetrahydrofolate = N(6)-[(R)-dihydrolipoyl]-L-lysyl-[protein] + (6R)-5,10-methylene-5,6,7,8-tetrahydrofolate + NH4(+). Its function is as follows. The glycine cleavage system catalyzes the degradation of glycine. This chain is Aminomethyltransferase, found in Rubrobacter xylanophilus (strain DSM 9941 / JCM 11954 / NBRC 16129 / PRD-1).